Here is a 147-residue protein sequence, read N- to C-terminus: Lysozyme C (147 aa).

An N-terminal signal peptide occupies residues 1-18 (MRSLLVLVLCFLPLAALG). In terms of domain architecture, C-type lysozyme spans 19-147 (KVYGRCELAA…VNAWIRGCRL (129 aa)). Intrachain disulfides connect Cys-24–Cys-145, Cys-48–Cys-133, Cys-82–Cys-98, and Cys-94–Cys-112. Catalysis depends on residues Glu-53 and Asp-70.

Belongs to the glycosyl hydrolase 22 family. In terms of assembly, monomer.

It is found in the secreted. The enzyme catalyses Hydrolysis of (1-&gt;4)-beta-linkages between N-acetylmuramic acid and N-acetyl-D-glucosamine residues in a peptidoglycan and between N-acetyl-D-glucosamine residues in chitodextrins.. Functionally, lysozymes have primarily a bacteriolytic function; those in tissues and body fluids are associated with the monocyte-macrophage system and enhance the activity of immunoagents. This is Lysozyme C (LYZ) from Coturnix japonica (Japanese quail).